Here is a 295-residue protein sequence, read N- to C-terminus: Protoheme IX farnesyltransferase (295 aa).

Transmembrane regions (helical) follow at residues 30-50 (LVVLTGVTGIIIAPGNIHPLI), 51-71 (AVISTLCIALGSGAAGAINMW), 93-115 (ISRSSALEVGLVLSFISVTIMMI), 119-136 (YISGILLAISIGFYIYVY), 148-168 (IVIGGAAGALPPIIGWTSVTG), 175-195 (LVLFLIIFMWTPPHFWALSLL), 219-239 (IHILVYSILLFPITLLPGLFL), 244-264 (LYEITAIPLGLMFVVQAFQVF), and 275-295 (MFTYSIIYLFILFTCIMLSSF).

Belongs to the UbiA prenyltransferase family. Protoheme IX farnesyltransferase subfamily.

Its subcellular location is the cell inner membrane. The enzyme catalyses heme b + (2E,6E)-farnesyl diphosphate + H2O = Fe(II)-heme o + diphosphate. Its pathway is porphyrin-containing compound metabolism; heme O biosynthesis; heme O from protoheme: step 1/1. In terms of biological role, converts heme B (protoheme IX) to heme O by substitution of the vinyl group on carbon 2 of heme B porphyrin ring with a hydroxyethyl farnesyl side group. The polypeptide is Protoheme IX farnesyltransferase (Ehrlichia ruminantium (strain Gardel)).